Reading from the N-terminus, the 99-residue chain is Large ribosomal subunit protein uL23 (99 aa).

This sequence belongs to the universal ribosomal protein uL23 family. As to quaternary structure, part of the 50S ribosomal subunit. Contacts protein L29, and trigger factor when it is bound to the ribosome.

In terms of biological role, one of the early assembly proteins it binds 23S rRNA. One of the proteins that surrounds the polypeptide exit tunnel on the outside of the ribosome. Forms the main docking site for trigger factor binding to the ribosome. The chain is Large ribosomal subunit protein uL23 from Saccharopolyspora erythraea (strain ATCC 11635 / DSM 40517 / JCM 4748 / NBRC 13426 / NCIMB 8594 / NRRL 2338).